The chain runs to 253 residues: MDIPLICNDSALSQKAKILRKKWGFLSTQSDHFQLHLLPEYLALEQKDDPKQGLVFVDFVSGSVAHRRKFGGGKGQAIAKAIGLKPGVQVDVIDATAGLGRDAFVLASLGCNVTMIERSAVAAALLEDGLERAYLNLEIGTWMKQRMRLHFGSASEYLQHHQTGVVYLDPMFPHKKKSALVKKEMRVFQGVVGEDLDADSLLEAALNAARYRVVVKRPDYAPFLNDKKPTMSIKTKKNRFDVYVKQAMPQNKS.

S-adenosyl-L-methionine contacts are provided by residues 101-102 (RD), 117-118 (ER), and Asp-169.

It belongs to the methyltransferase superfamily. RsmJ family.

The protein localises to the cytoplasm. It carries out the reaction guanosine(1516) in 16S rRNA + S-adenosyl-L-methionine = N(2)-methylguanosine(1516) in 16S rRNA + S-adenosyl-L-homocysteine + H(+). Its function is as follows. Specifically methylates the guanosine in position 1516 of 16S rRNA. The polypeptide is Ribosomal RNA small subunit methyltransferase J (Psychromonas ingrahamii (strain DSM 17664 / CCUG 51855 / 37)).